The sequence spans 145 residues: Large-conductance mechanosensitive channel (145 aa).

2 consecutive transmembrane segments (helical) span residues 16–36 (VVDL…VTSF) and 83–103 (GVFI…FMVI).

The protein belongs to the MscL family. In terms of assembly, homopentamer.

Its subcellular location is the cell inner membrane. Its function is as follows. Channel that opens in response to stretch forces in the membrane lipid bilayer. May participate in the regulation of osmotic pressure changes within the cell. The polypeptide is Large-conductance mechanosensitive channel (Geobacter metallireducens (strain ATCC 53774 / DSM 7210 / GS-15)).